Consider the following 88-residue polypeptide: Small ribosomal subunit protein bS20 (88 aa).

Residues 1–28 (MANIKSQIKRNRQNEKRRLRNKSVKSSL) form a disordered region. Residues 7-23 (QIKRNRQNEKRRLRNKS) are compositionally biased toward basic residues.

Belongs to the bacterial ribosomal protein bS20 family.

Functionally, binds directly to 16S ribosomal RNA. The chain is Small ribosomal subunit protein bS20 from Salinispora tropica (strain ATCC BAA-916 / DSM 44818 / JCM 13857 / NBRC 105044 / CNB-440).